Consider the following 450-residue polypeptide: Phosphoglucosamine mutase (450 aa).

Ser-102 acts as the Phosphoserine intermediate in catalysis. Ser-102, Asp-244, Asp-246, and Asp-248 together coordinate Mg(2+). A Phosphoserine modification is found at Ser-102.

This sequence belongs to the phosphohexose mutase family. Mg(2+) serves as cofactor. Post-translationally, activated by phosphorylation.

It catalyses the reaction alpha-D-glucosamine 1-phosphate = D-glucosamine 6-phosphate. Catalyzes the conversion of glucosamine-6-phosphate to glucosamine-1-phosphate. In Solidesulfovibrio magneticus (strain ATCC 700980 / DSM 13731 / RS-1) (Desulfovibrio magneticus), this protein is Phosphoglucosamine mutase.